The sequence spans 215 residues: dITP/XTP pyrophosphatase (215 aa).

Position 13-18 (13-18 (THNIGK)) interacts with substrate. Asp74 acts as the Proton acceptor in catalysis. Mg(2+) is bound at residue Asp74. Substrate-binding positions include Ser75, 163–166 (FGFD), Lys186, and 199–200 (HR).

The protein belongs to the HAM1 NTPase family. In terms of assembly, homodimer. The cofactor is Mg(2+).

The catalysed reaction is XTP + H2O = XMP + diphosphate + H(+). The enzyme catalyses dITP + H2O = dIMP + diphosphate + H(+). It carries out the reaction ITP + H2O = IMP + diphosphate + H(+). Pyrophosphatase that catalyzes the hydrolysis of nucleoside triphosphates to their monophosphate derivatives, with a high preference for the non-canonical purine nucleotides XTP (xanthosine triphosphate), dITP (deoxyinosine triphosphate) and ITP. Seems to function as a house-cleaning enzyme that removes non-canonical purine nucleotides from the nucleotide pool, thus preventing their incorporation into DNA/RNA and avoiding chromosomal lesions. This is dITP/XTP pyrophosphatase from Bartonella henselae (strain ATCC 49882 / DSM 28221 / CCUG 30454 / Houston 1) (Rochalimaea henselae).